The primary structure comprises 435 residues: Protein deadpan (435 aa).

Low complexity predominate over residues 18–27 (GYSDSYGSNG). Positions 18–48 (GYSDSYGSNGRMSNPNGLSKAELRKTNKPIM) are disordered. Residues 40-97 (LRKTNKPIMEKRRRARINHCLNELKSLILEAMKKDPARHTKLEKADILEMTVKHLQSV) form the bHLH domain. Residues 116 to 149 (FKTGFVECAEEVNRYVSQMDGIDTGVRQRLSAHL) enclose the Orange domain. 2 disordered regions span residues 305–334 (QLPV…AASP) and 349–416 (STPP…DEPS). A compositionally biased stretch (low complexity) spans 311–324 (STSPPLSPISSISS). Polar residues-rich tracts occupy residues 355-378 (SAET…SSGC) and 385-395 (LQQQQVSSTSG). Phosphoserine is present on residues Ser407, Ser408, and Ser411. Positions 432 to 435 (WRPW) match the WRPW motif motif.

As to quaternary structure, homodimer. Heterodimer with E(spl)mgamma-HLH and E(spl). Transcription repression requires formation of a complex with the corepressor protein Groucho. Interacts (via bHLH motif) with sisA. Interacts with da.

The protein resides in the nucleus. Its function is as follows. Transcriptional repressor of genes that require a bHLH protein for their transcription. In the larval brain, required to maintain the self-renewal and identity of type II neuroblasts by regulating the expression of the transcriptional repressor erm together with other self-renewal transcriptional repressors such as klu and E(spl)mgamma-HLH. As part of its role in neuroblasts development, has been shown to be a direct target of the Notch signaling pathway, however might work also independently of N/Notch. In the developing larval and pupal brain, required for mushroom body differentiation. Involved in sex determination and SXL transcription repression when in complex with the corepressor protein Groucho. The sequence is that of Protein deadpan (dpn) from Drosophila melanogaster (Fruit fly).